Reading from the N-terminus, the 130-residue chain is MVRTSVLHDALNSINNAEKAGKRQVLIRPSSKVIIKFLQVMQKHGYIGEFEEVDDHRSGKIVVQLNGRMNKCGVISPRYNVRLAELEKWVVKLLPARQFGYVILTTSAGIMDHEEARRKHVSGKIIGFFY.

It belongs to the universal ribosomal protein uS8 family. In terms of assembly, component of the small ribosomal subunit (SSU). Mature N.crassa ribosomes consist of a small (40S) and a large (60S) subunit. The 40S small subunit contains 1 molecule of ribosomal RNA (18S rRNA) and at least 32 different proteins. The large 60S subunit contains 3 rRNA molecules (26S, 5.8S and 5S rRNA) and at least 42 different proteins.

The protein localises to the cytoplasm. Component of the ribosome, a large ribonucleoprotein complex responsible for the synthesis of proteins in the cell. The small ribosomal subunit (SSU) binds messenger RNAs (mRNAs) and translates the encoded message by selecting cognate aminoacyl-transfer RNA (tRNA) molecules. The large subunit (LSU) contains the ribosomal catalytic site termed the peptidyl transferase center (PTC), which catalyzes the formation of peptide bonds, thereby polymerizing the amino acids delivered by tRNAs into a polypeptide chain. The nascent polypeptides leave the ribosome through a tunnel in the LSU and interact with protein factors that function in enzymatic processing, targeting, and the membrane insertion of nascent chains at the exit of the ribosomal tunnel. The chain is Small ribosomal subunit protein uS8 (crp-27) from Neurospora crassa (strain ATCC 24698 / 74-OR23-1A / CBS 708.71 / DSM 1257 / FGSC 987).